The sequence spans 37 residues: Mu-agatoxin-Aa1e (37 aa).

Cystine bridges form between Cys-2–Cys-18, Cys-9–Cys-23, Cys-17–Cys-33, and Cys-25–Cys-31. Asn-37 carries the asparagine amide modification.

It belongs to the neurotoxin 07 (Beta/delta-agtx) family. 03 (aga-4) subfamily. Aga sub-subfamily. In terms of tissue distribution, expressed by the venom gland.

It localises to the secreted. Its function is as follows. Insecticidal neurotoxin that induces an irreversible spastic paralysis when injected into insects. Modifies presynaptic voltage-gated sodium channels (Nav), causing them to open at the normal resting potential of the nerve. This leads to spontaneous release of neurotransmitter and repetitive action potentials in motor neurons. This Agelenopsis aperta (North American funnel-web spider) protein is Mu-agatoxin-Aa1e.